The primary structure comprises 444 residues: Methylenetetrahydrofolate--tRNA-(uracil-5-)-methyltransferase TrmFO (444 aa).

Residue 10–15 coordinates FAD; sequence GAGLAG.

It belongs to the MnmG family. TrmFO subfamily. It depends on FAD as a cofactor.

The protein localises to the cytoplasm. The enzyme catalyses uridine(54) in tRNA + (6R)-5,10-methylene-5,6,7,8-tetrahydrofolate + NADH + H(+) = 5-methyluridine(54) in tRNA + (6S)-5,6,7,8-tetrahydrofolate + NAD(+). It carries out the reaction uridine(54) in tRNA + (6R)-5,10-methylene-5,6,7,8-tetrahydrofolate + NADPH + H(+) = 5-methyluridine(54) in tRNA + (6S)-5,6,7,8-tetrahydrofolate + NADP(+). In terms of biological role, catalyzes the folate-dependent formation of 5-methyl-uridine at position 54 (M-5-U54) in all tRNAs. The chain is Methylenetetrahydrofolate--tRNA-(uracil-5-)-methyltransferase TrmFO from Streptococcus uberis (strain ATCC BAA-854 / 0140J).